Consider the following 146-residue polypeptide: Snaclec stejaggregin-B subunit beta-2 (146 aa).

The first 23 residues, 1–23 (MGRFIFVSFGLLVVFLSLSGSGA), serve as a signal peptide directing secretion. One can recognise a C-type lectin domain in the interval 32–143 (YDLYCYRVFQ…CSQTYPFVCK (112 aa)). Intrachain disulfides connect Cys53–Cys142 and Cys119–Cys134.

Belongs to the snaclec family. Heteromultimer; disulfide-linked. In terms of tissue distribution, expressed by the venom gland.

Its subcellular location is the secreted. Functionally, interferes with one step of hemostasis (modulation of platelet aggregation, or coagulation cascade, for example). This is Snaclec stejaggregin-B subunit beta-2 from Trimeresurus stejnegeri (Chinese green tree viper).